A 119-amino-acid chain; its full sequence is Holo-[acyl-carrier-protein] synthase (119 aa).

Mg(2+)-binding residues include Asp-8 and Glu-59.

Belongs to the P-Pant transferase superfamily. AcpS family. Requires Mg(2+) as cofactor.

It localises to the cytoplasm. The enzyme catalyses apo-[ACP] + CoA = holo-[ACP] + adenosine 3',5'-bisphosphate + H(+). Transfers the 4'-phosphopantetheine moiety from coenzyme A to a Ser of acyl-carrier-protein. This is Holo-[acyl-carrier-protein] synthase from Staphylococcus aureus (strain USA300).